We begin with the raw amino-acid sequence, 238 residues long: Probable xyloglucan-specific endo-beta-1,4-glucanase A (238 aa).

The first 18 residues, 1–18, serve as a signal peptide directing secretion; that stretch reads MKLSLSVALSLAAATAQA. Asparagine 106 and asparagine 171 each carry an N-linked (GlcNAc...) asparagine glycan.

This sequence belongs to the glycosyl hydrolase 12 (cellulase H) family.

It is found in the secreted. The catalysed reaction is xyloglucan + H2O = xyloglucan oligosaccharides.. Its function is as follows. Catalyzes endohydrolysis of 1,4-beta-D-glucosidic linkages in xyloglucan with retention of the beta-configuration of the glycosyl residues. Specific for xyloglucan and does not hydrolyze other cell wall components. The polypeptide is Probable xyloglucan-specific endo-beta-1,4-glucanase A (xgeA) (Aspergillus fumigatus (strain CBS 144.89 / FGSC A1163 / CEA10) (Neosartorya fumigata)).